Consider the following 124-residue polypeptide: MVTINQLVGNARSIRVVKSSVPALESCPQKRGVCIRVYTTTPKKPNSALRKVCRVRLTNGLEVTCYIGGEGHNLQEHASILIRGGRVKDLPGVRYHVVRGALDCSGVKDRKNGRSKYGTKKLKS.

Asp-89 bears the 3-methylthioaspartic acid mark.

Belongs to the universal ribosomal protein uS12 family. As to quaternary structure, part of the 30S ribosomal subunit. Contacts proteins S8 and S17. May interact with IF1 in the 30S initiation complex.

Functionally, with S4 and S5 plays an important role in translational accuracy. Its function is as follows. Interacts with and stabilizes bases of the 16S rRNA that are involved in tRNA selection in the A site and with the mRNA backbone. Located at the interface of the 30S and 50S subunits, it traverses the body of the 30S subunit contacting proteins on the other side and probably holding the rRNA structure together. The combined cluster of proteins S8, S12 and S17 appears to hold together the shoulder and platform of the 30S subunit. This is Small ribosomal subunit protein uS12 from Blochmanniella floridana.